The primary structure comprises 671 residues: Huntingtin-associated protein 1 (671 aa).

Disordered regions lie at residues 1-83 (MRPK…ARRP) and 258-289 (DSDEEDEDEEEEEEEKEAEEEQEEEEAEEDLQ). The span at 20–29 (PAALTCAPSP) shows a compositional bias: low complexity. Residues 106-461 (RFVFQGPFGS…EEVKTLRQQP (356 aa)) enclose the HAP1 N-terminal domain. Residues 212–427 (QSLVKQNSVL…IQMQLQEESV (216 aa)) are a coiled coil. Acidic residues predominate over residues 258-288 (DSDEEDEDEEEEEEEKEAEEEQEEEEAEEDL).

In terms of assembly, self-associates. Interacts with HTT/huntingtin; enhanced by an expanded polyglutamine repeat within HTT. Interacts with DCTN1; decreased in presence of HTT with expanded polyglutamine repeat. Interacts with KLC2. Interacts with ITPR1 and APP. Interacts with AR; decreased by an expanded polyglutamine repeat within AR. Interacts with YWHAZ. Interacts with BDNF and SORT1; probably forming a complex involved in proBDNF trafficking, degradation and processing. Interacts with TBP, AHI1, HGS and KALRN. Interacts with KIF5A, KIF5B, KIF5C and GABRB3; indicative for an HAP1:KIF5 complex transporting a GABA(A) receptor as cargo. Interacts with ATXN3; in STBs with ATXN3 poly-Gln region with 27 repeats (normal population) and 79 repeats (spinocerebellar ataxia 3 (SCA3) patients) associating in the same strength. Interacts with NTRK2; HAP1 stabilizes association of NTRK2 with SORT1 preventing NTRK2 degradation. Interacts with CFAP263. Predominantly expressed in brain. Selectively expressed in neurons.

Its subcellular location is the cytoplasm. It localises to the cell projection. The protein localises to the axon. The protein resides in the presynapse. It is found in the cytoskeleton. Its subcellular location is the dendritic spine. It localises to the dendrite. The protein localises to the lysosome. The protein resides in the endoplasmic reticulum. It is found in the mitochondrion. Its subcellular location is the nucleus. It localises to the cytoplasmic vesicle. The protein localises to the autophagosome. The protein resides in the early endosome. It is found in the growth cone. Its subcellular location is the neuron projection. It localises to the secretory vesicle. The protein localises to the synaptic vesicle. In terms of biological role, originally identified as neuronal protein that specifically associates with HTT/huntingtin and the binding is enhanced by an expanded polyglutamine repeat within HTT possibly affecting HAP1 interaction properties. Both HTT and HAP1 are involved in intracellular trafficking and HAP1 is proposed to link HTT to motor proteins and/or transport cargos. Seems to play a role in vesicular transport within neurons and axons such as from early endosomes to late endocytic compartments and to promote neurite outgrowth. The vesicular transport function via association with microtubule-dependent transporters can be attenuated by association with mutant HTT. Involved in the axonal transport of BDNF and its activity-dependent secretion; the function seems to involve HTT, DCTN1 and a complex with SORT1. Involved in APP trafficking and seems to facilitate APP anterograde transport and membrane insertion thereby possibly reducing processing into amyloid beta. Involved in delivery of gamma-aminobutyric acid (GABA(A)) receptors to synapses; the function is dependent on kinesin motor protein KIF5 and is disrupted by HTT with expanded polyglutamine repeat. Involved in regulation of autophagosome motility by promoting efficient retrograde axonal transport. Seems to be involved in regulation of membrane receptor recycling and degradation, and respective signal transduction, including GABA(A) receptors, tyrosine kinase receptors, EGFR, IP3 receptor and androgen receptor. Among others suggested to be involved in control of feeding behavior (involving hypothalamic GABA(A) receptors), cerebellar and brainstem development (involving AHI1 and NTRK1/TrkA), postnatal neurogenesis (involving hypothalamic NTRK2/TrkB), and ITPR1/InsP3R1-mediated Ca(2+) release (involving HTT and possibly the effect of mutant HTT). Via association with DCTN1/dynactin p150-glued and HTT/huntingtin involved in cytoplasmic retention of REST in neurons. May be involved in ciliogenesis. Involved in regulation of exocytosis. Seems to be involved in formation of cytoplasmic inclusion bodies (STBs). In case of anomalous expression of TBP, can sequester a subset of TBP into STBs; sequestration is enhanced by an expanded polyglutamine repeat within TBP. HAP1-containing STBs have been proposed to play a protective role against neurodegeneration in Huntigton disease (HD) and spinocerebellar ataxia 17 (SCA17). This chain is Huntingtin-associated protein 1 (HAP1), found in Homo sapiens (Human).